The following is a 239-amino-acid chain: Ribonuclease 3 (239 aa).

One can recognise an RNase III domain in the interval 12–137 (RLTLEAAIGH…LIAALYLDGG (126 aa)). Glu-50 is a Mg(2+) binding site. Residue Asp-54 is part of the active site. The Mg(2+) site is built by Asp-123 and Glu-126. The active site involves Glu-126. Positions 162-231 (DAKTELQEWA…ATRILEREGI (70 aa)) constitute a DRBM domain.

The protein belongs to the ribonuclease III family. As to quaternary structure, homodimer. The cofactor is Mg(2+).

Its subcellular location is the cytoplasm. The enzyme catalyses Endonucleolytic cleavage to 5'-phosphomonoester.. Functionally, digests double-stranded RNA. Involved in the processing of primary rRNA transcript to yield the immediate precursors to the large and small rRNAs (23S and 16S). Processes some mRNAs, and tRNAs when they are encoded in the rRNA operon. Processes pre-crRNA and tracrRNA of type II CRISPR loci if present in the organism. In Rhizobium rhizogenes (strain K84 / ATCC BAA-868) (Agrobacterium radiobacter), this protein is Ribonuclease 3.